The chain runs to 103 residues: MMTYEIKTKISNSYERKCEKYRISHHVFDYQPDIKYMDGIRKIDPYLFLSDDSKKTLGKYHKPLDIIDAVEDYFEVFYDELCDSLNNNDNSENENSDKKLKKN.

This is an uncharacterized protein from Acanthamoeba polyphaga mimivirus (APMV).